Here is a 186-residue protein sequence, read N- to C-terminus: uncharacterized protein (186 aa).

The protein to M.jannaschii MJ0208.

This is an uncharacterized protein from Methanocaldococcus jannaschii (strain ATCC 43067 / DSM 2661 / JAL-1 / JCM 10045 / NBRC 100440) (Methanococcus jannaschii).